Consider the following 339-residue polypeptide: Vomeronasal type-1 receptor A14 (339 aa).

The Extracellular segment spans residues M1–T42. Residues F43–F63 form a helical membrane-spanning segment. At K64–D75 the chain is on the cytoplasmic side. The chain crosses the membrane as a helical span at residues L76–A96. Topologically, residues T97–R119 are extracellular. C111 and C198 are joined by a disulfide. Residues T120–L140 traverse the membrane as a helical segment. At S141–C160 the chain is on the cytoplasmic side. Residues A161–I181 form a helical membrane-spanning segment. The Extracellular portion of the chain corresponds to A182–T213. N-linked (GlcNAc...) asparagine glycosylation occurs at N185. The helical transmembrane segment at L214–V234 threads the bilayer. Residues A235–R264 lie on the Cytoplasmic side of the membrane. Residues S265–S285 form a helical membrane-spanning segment. Residues S286–S296 are Extracellular-facing. Residues Y297 to V317 form a helical membrane-spanning segment. Topologically, residues T318–H339 are cytoplasmic.

This sequence belongs to the G-protein coupled receptor 1 family.

Its subcellular location is the cell membrane. In terms of biological role, putative pheromone receptor implicated in the regulation of social as well as reproductive behavior. The polypeptide is Vomeronasal type-1 receptor A14 (Rattus norvegicus (Rat)).